Reading from the N-terminus, the 201-residue chain is Molybdenum cofactor guanylyltransferase (201 aa).

GTP-binding positions include 15 to 17 (LAG), K28, D74, and D104. D104 serves as a coordination point for Mg(2+).

Belongs to the MobA family. Monomer. The cofactor is Mg(2+).

It is found in the cytoplasm. It carries out the reaction Mo-molybdopterin + GTP + H(+) = Mo-molybdopterin guanine dinucleotide + diphosphate. Its function is as follows. Transfers a GMP moiety from GTP to Mo-molybdopterin (Mo-MPT) cofactor (Moco or molybdenum cofactor) to form Mo-molybdopterin guanine dinucleotide (Mo-MGD) cofactor. This Pseudomonas syringae pv. tomato (strain ATCC BAA-871 / DC3000) protein is Molybdenum cofactor guanylyltransferase.